We begin with the raw amino-acid sequence, 402 residues long: S-adenosylmethionine synthase (402 aa).

137–142 (GQGSAD) contacts ATP.

This sequence belongs to the AdoMet synthase 2 family. Mg(2+) is required as a cofactor.

The catalysed reaction is L-methionine + ATP + H2O = S-adenosyl-L-methionine + phosphate + diphosphate. The protein operates within amino-acid biosynthesis; S-adenosyl-L-methionine biosynthesis; S-adenosyl-L-methionine from L-methionine: step 1/1. Catalyzes the formation of S-adenosylmethionine from methionine and ATP. The protein is S-adenosylmethionine synthase of Pyrobaculum neutrophilum (strain DSM 2338 / JCM 9278 / NBRC 100436 / V24Sta) (Thermoproteus neutrophilus).